A 115-amino-acid chain; its full sequence is MEILMIFVCGILTAMSVYLILSKSLIRIIIGTTLQTHTANLFLITMGGLKKGEVPIYEKGITSYVDPIPQALILTAIVISFSVTAFFLVLAFRSYKELGTDNVESMKGVLEDDRE.

A run of 3 helical transmembrane segments spans residues methionine 1–leucine 21, isoleucine 28–glycine 48, and leucine 72–phenylalanine 92.

This sequence belongs to the CPA3 antiporters (TC 2.A.63) subunit C family. May form a heterooligomeric complex that consists of seven subunits: mnhA1, mnhB1, mnhC1, mnhD1, mnhE1, mnhF1 and mnhG1.

Its subcellular location is the cell membrane. Functionally, mnh complex is a Na(+)/H(+) antiporter involved in Na(+) excretion. This chain is Na(+)/H(+) antiporter subunit C1 (mnhC1), found in Staphylococcus saprophyticus subsp. saprophyticus (strain ATCC 15305 / DSM 20229 / NCIMB 8711 / NCTC 7292 / S-41).